Consider the following 524-residue polypeptide: Keratin, type II cytoskeletal 71 (524 aa).

The tract at residues 1–130 (MSRQFTCKSG…DPEIQKVRAQ (130 aa)) is head. The coil 1A stretch occupies residues 131-166 (EREQIKALNNKFASFIDKVRFLEQQNQVLQTKWELL). The IF rod domain occupies 131-444 (EREQIKALNN…KLLESEECRM (314 aa)). The segment at 167-185 (QQLDLNNCKNNLEPILEGH) is linker 1. The tract at residues 186 to 277 (ISNMRKQLET…CLFEAEMAQI (92 aa)) is coil 1B. Residues 278-301 (QSHISDMSVILSMDNNRNLDLDSI) form a linker 12 region. A coil 2 region spans residues 302 to 440 (IDEVRAQYEE…ATYRKLLESE (139 aa)). A tail region spans residues 441 to 524 (ECRMSGEYSS…LSTPSKKGGR (84 aa)). The tract at residues 493-524 (GGENRSRGSASDYKDTLTKGSSLSTPSKKGGR) is disordered. Residues 494-509 (GENRSRGSASDYKDTL) are compositionally biased toward basic and acidic residues. A compositionally biased stretch (polar residues) spans 510–524 (TKGSSLSTPSKKGGR).

This sequence belongs to the intermediate filament family. In terms of assembly, heterodimer of a type I and a type II keratin. Associates with KRT16 and/or KRT17. As to expression, specifically expressed in the inner root sheath (IRS) of the hair follicle. Present in Henle and the Huxley layers of the IRS, while expression in the cuticle is unsure (at protein level).

The protein resides in the cytoplasm. The protein localises to the cytoskeleton. Functionally, plays a central role in hair formation. Essential component of keratin intermediate filaments in the inner root sheath (IRS) of the hair follicle. This Mus musculus (Mouse) protein is Keratin, type II cytoskeletal 71 (Krt71).